The following is an 88-amino-acid chain: Chaplin-F (88 aa).

An N-terminal signal peptide occupies residues 1–36; the sequence is MYNPKEHFSMSRIAKGLALTSVAAAAVAGTAGVAAA. The 41-residue stretch at 47–87 folds into the Chaplin domain; that stretch reads SPGVLSGNVVQVPVHIPVNVCGNTIDVIGLLNPAFGNECEN. Cys67 and Cys85 form a disulfide bridge.

This sequence belongs to the chaplin family. Short chaplin subfamily. Homodimer; disulfide linked. About 20% of ChpF isolated from cell wall forms disulfide-bonded homodimers.

Its subcellular location is the cell surface. The protein localises to the secreted. The protein resides in the cell wall. It is found in the fimbrium. Functionally, one of 8 partially redundant surface-active proteins required for efficient formation of aerial mycelium; the short chaplins assemble into a hydrophobic, amyloidal fibrillar surface layer that envelopes and protects aerial hyphae and spores, presumably anchored to the long chaplins. Chaplins have an overlapping function with the surface-active SapB peptide; chaplins are essential on minimal medium while on rich medium both chaplins and SapB are required for efficient aerial hyphae formation. Chaplins are also involved in cell attachment to a hydrophobic surface. Forms amyloid fibrils in vitro probably composed of stacked beta-sheets, at low extracellular concentrations individually restores the ability to form aerial hyphae to a chaplin-deficient strain. A small chaplin extract (ChpD, ChpE, ChpF, ChpG and ChpH) self-assembles into 2 different amyloids; small fibrils at the air-water interface form an amphipathic membrane that resembles spore-surface structures involved in aerial hyphae formation, and hydrophilic fibrils in solution that resemble the fibers that attach cells to a hydrophobic surface. At the air-water interface the hydrophilic surface is in contact with water (probably equivalent to the peptidoglycan layer), while the hydrophobic face is exposed to the air, making the surface of the aerial hyphae hydrophobic. A small chaplin extract applied to a chaplin-deficient strain restores aerial hyphae formation. The small chaplin extract forms an amyloid-like structure similar to that seen on the surface of cells without rodlets (rdlA-rdlB deletions), and is highly surface active, reducing surface tension from 72 to 26 mJ/m(2), which probably allows escape of hyphae from an aqueous environment into air. ChpF alone is less surface active at pH 3.0 than at pH 10.0, it reduces the surface tension of water from 72.8 mN/m to 50 mN/m at pH 3.0 or to 37 mN/m at pH 10.0. ChpF and ChpG are sufficient to restore the rodlet layer and hydrophobicity to a strain deleted for the other 6 chaplin genes. The polypeptide is Chaplin-F (Streptomyces coelicolor (strain ATCC BAA-471 / A3(2) / M145)).